Reading from the N-terminus, the 410-residue chain is Phospho-N-acetylmuramoyl-pentapeptide-transferase (410 aa).

Helical transmembrane passes span 27–47, 77–97, 99–119, 140–160, 213–233, 248–268, 288–308, 312–332, 337–357, and 389–409; these read RMIL…PYFI, TPTM…VLWM, LTHI…LIGG, LFFQ…SSVN, PVVT…FFVI, GLLA…AFVS, IAIY…YNGY, VFMG…SAVL, FLLG…ILQV, and VIRF…SLKF.

It belongs to the glycosyltransferase 4 family. MraY subfamily. Requires Mg(2+) as cofactor.

It is found in the cell inner membrane. The catalysed reaction is UDP-N-acetyl-alpha-D-muramoyl-L-alanyl-gamma-D-glutamyl-meso-2,6-diaminopimeloyl-D-alanyl-D-alanine + di-trans,octa-cis-undecaprenyl phosphate = di-trans,octa-cis-undecaprenyl diphospho-N-acetyl-alpha-D-muramoyl-L-alanyl-D-glutamyl-meso-2,6-diaminopimeloyl-D-alanyl-D-alanine + UMP. It participates in cell wall biogenesis; peptidoglycan biosynthesis. Functionally, catalyzes the initial step of the lipid cycle reactions in the biosynthesis of the cell wall peptidoglycan: transfers peptidoglycan precursor phospho-MurNAc-pentapeptide from UDP-MurNAc-pentapeptide onto the lipid carrier undecaprenyl phosphate, yielding undecaprenyl-pyrophosphoryl-MurNAc-pentapeptide, known as lipid I. The polypeptide is Phospho-N-acetylmuramoyl-pentapeptide-transferase (Protochlamydia amoebophila (strain UWE25)).